A 182-amino-acid chain; its full sequence is ATP synthase subunit delta (182 aa).

Belongs to the ATPase delta chain family. As to quaternary structure, F-type ATPases have 2 components, F(1) - the catalytic core - and F(0) - the membrane proton channel. F(1) has five subunits: alpha(3), beta(3), gamma(1), delta(1), epsilon(1). F(0) has three main subunits: a(1), b(2) and c(10-14). The alpha and beta chains form an alternating ring which encloses part of the gamma chain. F(1) is attached to F(0) by a central stalk formed by the gamma and epsilon chains, while a peripheral stalk is formed by the delta and b chains.

It is found in the cell membrane. Increases 2-fold following exposure to low pH. Functionally, f(1)F(0) ATP synthase produces ATP from ADP in the presence of a proton or sodium gradient. F-type ATPases consist of two structural domains, F(1) containing the extramembraneous catalytic core and F(0) containing the membrane proton channel, linked together by a central stalk and a peripheral stalk. During catalysis, ATP synthesis in the catalytic domain of F(1) is coupled via a rotary mechanism of the central stalk subunits to proton translocation. In terms of biological role, this protein is part of the stalk that links CF(0) to CF(1). It either transmits conformational changes from CF(0) to CF(1) or is implicated in proton conduction. This chain is ATP synthase subunit delta, found in Lactobacillus acidophilus (strain ATCC 700396 / NCK56 / N2 / NCFM).